A 2090-amino-acid polypeptide reads, in one-letter code: Non-reducing polyketide synthase rdc1 (2090 aa).

The tract at residues 12–250 (FLVGDQVDSW…NPLNIHALQH (239 aa)) is N-terminal acylcarrier protein transacylase (SAT) domain. The 434-residue stretch at 375-808 (TGRIAIVGMS…GGNACLLLED (434 aa)) folds into the Ketosynthase family 3 (KS3) domain. Catalysis depends on for beta-ketoacyl synthase activity residues Cys551, His686, and His726. The segment at 912-1195 (IFVFSGQGSH…NQVCTQFVRA (284 aa)) is malonyl-CoA:ACP transacylase (MAT) domain. Ser1003 serves as the catalytic For acyl/malonyl transferase activity. Residues 1293-1433 (QHVAKESSSN…LVVQKNVKAL (141 aa)) form an N-terminal hotdog fold region. The PKS/mFAS DH domain occupies 1293–1607 (QHVAKESSSN…FVRISNALLQ (315 aa)). Residues 1304–1604 (GKLEITFRAS…NLSFVRISNA (301 aa)) are product template (PT) domain. Residues 1459-1607 (QGHWLKHDIF…FVRISNALLQ (149 aa)) form a C-terminal hotdog fold region. The tract at residues 1615–1650 (SKPVGRGMAKQEKQEVPATTEVVRQPEKEESRHSVD) is disordered. The span at 1638 to 1649 (RQPEKEESRHSV) shows a compositional bias: basic and acidic residues. The Carrier domain occupies 1649-1726 (VDTPSFSDVL…DIKRAFDILT (78 aa)). Ser1686 bears the O-(pantetheine 4'-phosphoryl)serine mark. Positions 1820–1964 (ADGTGSIATY…THQHLKALFA (145 aa)) are thioesterase (TE) domain.

It functions in the pathway secondary metabolite biosynthesis. Functionally, non-reducing polyketide synthase; part of the gene cluster that mediates the biosynthesis of radicicol, a resorcylic acid lactone (RAL) that irreversibly inhibits the HSP90 molecular chaperone, an important target for cancer chemotherapy. The radicicol cluster encodes only two apparent post-PKS enzymes, a cytochrome P450 monooxygenase (rdc4) and a non-heme halogenase (rdc2) that could introduce the epoxide and the chlorine, respectively. If this cluster includes all the genes required for radicicol biosynthesis, the remaining structural features of radicicol are presumably generated by the PKSs rdc1 and rdc5. The C-2' ketone could arise if the R-PKS rdc5 and NR-PKS rdc1 each carry out four iterations, in contrast to the five iteration-three iteration split for the hypothemycin PKSs. The origin of the cis 5',6' double bond is not known. The radicicol R-PKS rdc5 ER domain may catalyze either double bond isomerization or reduction in the third iteration. This chain is Non-reducing polyketide synthase rdc1, found in Metacordyceps chlamydosporia (Nematophagous fungus).